Consider the following 225-residue polypeptide: Peptidyl-prolyl cis-trans isomerase D (225 aa).

Residues 1–22 form the signal peptide; it reads MKLQFFSFITLFACLFTTAIFA. A PPIase cyclophilin-type domain is found at 37–195; it reads YFDINHGDKQ…KEVIIVESGE (159 aa). N-linked (GlcNAc...) asparagine glycosylation occurs at asparagine 139. The Prevents secretion from ER signature appears at 222-225; the sequence is HDEL.

This sequence belongs to the cyclophilin-type PPIase family. PPIase B subfamily.

The protein localises to the endoplasmic reticulum lumen. The enzyme catalyses [protein]-peptidylproline (omega=180) = [protein]-peptidylproline (omega=0). Its function is as follows. PPIases accelerate the folding of proteins. It catalyzes the cis-trans isomerization of proline imidic peptide bonds in oligopeptides. The protein is Peptidyl-prolyl cis-trans isomerase D of Saccharomyces cerevisiae (strain ATCC 204508 / S288c) (Baker's yeast).